We begin with the raw amino-acid sequence, 507 residues long: Glycerol kinase (507 aa).

Residue Thr15 coordinates ADP. The ATP site is built by Thr15, Thr16, and Ser17. Thr15 contributes to the sn-glycerol 3-phosphate binding site. Arg19 provides a ligand contact to ADP. Residues Arg85, Glu86, Tyr137, and Asp250 each coordinate sn-glycerol 3-phosphate. Glycerol is bound by residues Arg85, Glu86, Tyr137, Asp250, and Gln251. The ADP site is built by Thr272, Gly316, and Gly418. Residues Thr272, Gly316, and Gly418 each contribute to the ATP site.

It belongs to the FGGY kinase family.

It carries out the reaction glycerol + ATP = sn-glycerol 3-phosphate + ADP + H(+). It participates in polyol metabolism; glycerol degradation via glycerol kinase pathway; sn-glycerol 3-phosphate from glycerol: step 1/1. With respect to regulation, inhibited by fructose 1,6-bisphosphate (FBP). Functionally, key enzyme in the regulation of glycerol uptake and metabolism. Catalyzes the phosphorylation of glycerol to yield sn-glycerol 3-phosphate. This is Glycerol kinase from Malacoplasma penetrans (strain HF-2) (Mycoplasma penetrans).